Consider the following 339-residue polypeptide: Nicotinate-nucleotide--dimethylbenzimidazole phosphoribosyltransferase (339 aa).

The active-site Proton acceptor is Glu-306.

It belongs to the CobT family.

The enzyme catalyses 5,6-dimethylbenzimidazole + nicotinate beta-D-ribonucleotide = alpha-ribazole 5'-phosphate + nicotinate + H(+). The protein operates within nucleoside biosynthesis; alpha-ribazole biosynthesis; alpha-ribazole from 5,6-dimethylbenzimidazole: step 1/2. Catalyzes the synthesis of alpha-ribazole-5'-phosphate from nicotinate mononucleotide (NAMN) and 5,6-dimethylbenzimidazole (DMB). This is Nicotinate-nucleotide--dimethylbenzimidazole phosphoribosyltransferase from Brucella abortus (strain S19).